The primary structure comprises 576 residues: MISGILASPGITFGKALLLKNEILSINYKKISNQDIHQEVKKFINGKNKTICQLQEIKNKTQQKFENTQSNIFEGHIMLLEDDEFQQKIISLIQDRNISSEYATKIIIEEHAKTLEQLNDEYLKNRAIDIQDIGNRLLKNILNIDIKDLNNIKNPVILIARDLTPSETAQINLKKVLGFITDLGGQTSHTSIIARSLELPAIVGTKNITEKAKNDDFIILDSINNKISINPSLEEIHRIKQKKKKYESEKKLLIESKNLYAITKDKHKVEIGANISTIQDINNAKKYGAECIGLYRTEFLFMNRNYLPSEEEQFNTYKTIAEEMKNKSIIIRTMDVGGDKNISYMNIPKEENPFLGWRAIRIAIDRKEILHAQLKAILRASAFGKLRIMFPMIISVEEVRTLQYELEKLKQLLHHQKIPFNAKIEVGIMIETPASAIIAHHLAQEVDFFSIGSNDLTQYTLAVDRGNDLISHLYNPMSPSVLSLIQQVINASHKVGKWTGMCGELAGDEKATLLLLGMGLDEFSMSAATIPKIKKIIRESTFLDVKKLAKKVLLQPTYNEVNNTINTFININNKNK.

His-189 (tele-phosphohistidine intermediate) is an active-site residue. 2 residues coordinate phosphoenolpyruvate: Arg-296 and Arg-332. Residues Glu-431 and Asp-455 each contribute to the Mg(2+) site. Residues 454-455 and Arg-465 contribute to the phosphoenolpyruvate site; that span reads ND. Residue Cys-502 is the Proton donor of the active site.

Belongs to the PEP-utilizing enzyme family. Homodimer. The cofactor is Mg(2+).

It is found in the cytoplasm. It carries out the reaction L-histidyl-[protein] + phosphoenolpyruvate = N(pros)-phospho-L-histidyl-[protein] + pyruvate. In terms of biological role, general (non sugar-specific) component of the phosphoenolpyruvate-dependent sugar phosphotransferase system (sugar PTS). This major carbohydrate active-transport system catalyzes the phosphorylation of incoming sugar substrates concomitantly with their translocation across the cell membrane. Enzyme I transfers the phosphoryl group from phosphoenolpyruvate (PEP) to the phosphoryl carrier protein (HPr). This is Phosphoenolpyruvate-protein phosphotransferase (ptsI) from Buchnera aphidicola subsp. Baizongia pistaciae (strain Bp).